Reading from the N-terminus, the 262-residue chain is Hydroxyethylthiazole kinase (262 aa).

Residue M50 participates in substrate binding. Residues R125 and T171 each coordinate ATP. G198 serves as a coordination point for substrate.

It belongs to the Thz kinase family. Mg(2+) is required as a cofactor.

The enzyme catalyses 5-(2-hydroxyethyl)-4-methylthiazole + ATP = 4-methyl-5-(2-phosphooxyethyl)-thiazole + ADP + H(+). Its pathway is cofactor biosynthesis; thiamine diphosphate biosynthesis; 4-methyl-5-(2-phosphoethyl)-thiazole from 5-(2-hydroxyethyl)-4-methylthiazole: step 1/1. Catalyzes the phosphorylation of the hydroxyl group of 4-methyl-5-beta-hydroxyethylthiazole (THZ). The sequence is that of Hydroxyethylthiazole kinase from Shigella sonnei (strain Ss046).